The sequence spans 239 residues: MNKNIVIKSMAALAILTSVTGINAAVVEETQQIANAEKNVTQVKDTNIFPYNGVVSFKDATGFVIGKNTIITNKHVSKDYKVGDRITAHPNGDKGNGGIYKIKSISDYPGDEDISVMNIEEQAVERGPKGFNFNENVQAFNFAKDAKVDDKIKVIGYPLPAQNSFKQFESTGTIKRIKDNILNFDAYIEPGNSGSPVLNSNNEVIGVVYGGIGKIGSEYNGAVYFTPQIKDFIQKHIEQ.

The N-terminal stretch at 1-36 is a signal peptide; it reads MNKNIVIKSMAALAILTSVTGINAAVVEETQQIANA. Residues H75, D113, and S193 each act as charge relay system in the active site.

It belongs to the peptidase S1B family.

Its subcellular location is the secreted. This Staphylococcus aureus (strain USA300 / TCH1516) protein is Serine protease SplC (splC).